The sequence spans 461 residues: ATP synthase subunit beta (461 aa).

151-158 (GGAGVGKT) is an ATP binding site.

The protein belongs to the ATPase alpha/beta chains family. F-type ATPases have 2 components, CF(1) - the catalytic core - and CF(0) - the membrane proton channel. CF(1) has five subunits: alpha(3), beta(3), gamma(1), delta(1), epsilon(1). CF(0) has three main subunits: a(1), b(2) and c(9-12). The alpha and beta chains form an alternating ring which encloses part of the gamma chain. CF(1) is attached to CF(0) by a central stalk formed by the gamma and epsilon chains, while a peripheral stalk is formed by the delta and b chains.

It is found in the cell inner membrane. The enzyme catalyses ATP + H2O + 4 H(+)(in) = ADP + phosphate + 5 H(+)(out). Functionally, produces ATP from ADP in the presence of a proton gradient across the membrane. The catalytic sites are hosted primarily by the beta subunits. The polypeptide is ATP synthase subunit beta (Colwellia psychrerythraea (strain 34H / ATCC BAA-681) (Vibrio psychroerythus)).